The chain runs to 572 residues: Moesin (572 aa).

The region spanning 1 to 294 (MPRGVAVRVT…GNHELYMRRR (294 aa)) is the FERM domain. Disordered regions lie at residues 444-508 (SQER…SYLP) and 523-544 (LQAM…QENI). Residues 454–475 (AQEAAAAQHAAQLAAQREAQQL) are compositionally biased toward low complexity. A compositionally biased stretch (acidic residues) spans 480–502 (EGEEDEQDHELEVQQDDNDDLDD). Basic and acidic residues predominate over residues 525–544 (AMKDESKGEDRYDKIHQENI).

It localises to the cell membrane. The protein localises to the cytoplasm. Its subcellular location is the cytoskeleton. The protein resides in the cell projection. Probably involved in connections of major cytoskeletal structures to the plasma membrane. The chain is Moesin from Lytechinus variegatus (Green sea urchin).